A 326-amino-acid chain; its full sequence is MKHFLRMLIQVCLFFYCKFLWRCLKFVMRKLTGRCELQRICYNTKPGASRTMKIETSLRDSKSKLLQTSVSVHPDAIEKTIDDIMELKKINPDINPQLGISLQACLLQIVGYRNLIADVEKLRRESYDSDNPQHEEMLLKLWKFLKPNTPLESRISKQWCEIGFQGDDPKTDFRGMGLLGLYNLQYFAERDAAAAQQVLSDSLHPKCSKFSKAEWEKKRMDKAIGYSFAIVGINITDLAYNLLVSGALKTHFYNIAPEAPTLSHFQQTFCYLMHEFHKFWIEEDPMDIMEFNRVREKFRKRIIKQLQNPDMALCPHFAASEGLINM.

Residues 133 to 306 (QHEEMLLKLW…KFRKRIIKQL (174 aa)) enclose the ELMO domain.

Its function is as follows. Acts as a GTPase-activating protein (GAP) toward guanine nucleotide exchange factors like ARL2, ARL3, ARF1 and ARF6, but not for GTPases outside the Arf family. The protein is ELMO domain-containing protein 1 (ELMOD1) of Bos taurus (Bovine).